A 132-amino-acid polypeptide reads, in one-letter code: DNA-directed RNA polymerase subunit omega (132 aa).

It belongs to the RNA polymerase subunit omega family. The RNAP catalytic core consists of 2 alpha, 1 beta, 1 beta' and 1 omega subunit. When a sigma factor is associated with the core the holoenzyme is formed, which can initiate transcription.

It catalyses the reaction RNA(n) + a ribonucleoside 5'-triphosphate = RNA(n+1) + diphosphate. In terms of biological role, promotes RNA polymerase assembly. Latches the N- and C-terminal regions of the beta' subunit thereby facilitating its interaction with the beta and alpha subunits. This Bartonella bacilliformis (strain ATCC 35685 / KC583 / Herrer 020/F12,63) protein is DNA-directed RNA polymerase subunit omega.